A 393-amino-acid chain; its full sequence is NAD(P)H-quinone oxidoreductase subunit H, chloroplastic (393 aa).

It belongs to the complex I 49 kDa subunit family. NDH is composed of at least 16 different subunits, 5 of which are encoded in the nucleus.

The protein resides in the plastid. It is found in the chloroplast thylakoid membrane. It catalyses the reaction a plastoquinone + NADH + (n+1) H(+)(in) = a plastoquinol + NAD(+) + n H(+)(out). The catalysed reaction is a plastoquinone + NADPH + (n+1) H(+)(in) = a plastoquinol + NADP(+) + n H(+)(out). In terms of biological role, NDH shuttles electrons from NAD(P)H:plastoquinone, via FMN and iron-sulfur (Fe-S) centers, to quinones in the photosynthetic chain and possibly in a chloroplast respiratory chain. The immediate electron acceptor for the enzyme in this species is believed to be plastoquinone. Couples the redox reaction to proton translocation, and thus conserves the redox energy in a proton gradient. This Jasminum nudiflorum (Winter jasmine) protein is NAD(P)H-quinone oxidoreductase subunit H, chloroplastic.